A 315-amino-acid chain; its full sequence is Small ribosomal subunit biogenesis GTPase RsgA (315 aa).

Residues 79–243 (LSKESHILGA…LIDTPGIKGF (165 aa)) form the CP-type G domain. Residues 128–131 (NKID) and 182–190 (GHSGVGKSS) each bind GTP. Residues cysteine 267, cysteine 272, histidine 274, and cysteine 280 each coordinate Zn(2+).

The protein belongs to the TRAFAC class YlqF/YawG GTPase family. RsgA subfamily. As to quaternary structure, monomer. Associates with 30S ribosomal subunit, binds 16S rRNA. Requires Zn(2+) as cofactor.

The protein resides in the cytoplasm. In terms of biological role, one of several proteins that assist in the late maturation steps of the functional core of the 30S ribosomal subunit. Helps release RbfA from mature subunits. May play a role in the assembly of ribosomal proteins into the subunit. Circularly permuted GTPase that catalyzes slow GTP hydrolysis, GTPase activity is stimulated by the 30S ribosomal subunit. This Porphyromonas gingivalis (strain ATCC 33277 / DSM 20709 / CIP 103683 / JCM 12257 / NCTC 11834 / 2561) protein is Small ribosomal subunit biogenesis GTPase RsgA.